A 119-amino-acid polypeptide reads, in one-letter code: Large ribosomal subunit protein uL22 (119 aa).

Belongs to the universal ribosomal protein uL22 family. As to quaternary structure, part of the 50S ribosomal subunit.

Its function is as follows. This protein binds specifically to 23S rRNA; its binding is stimulated by other ribosomal proteins, e.g. L4, L17, and L20. It is important during the early stages of 50S assembly. It makes multiple contacts with different domains of the 23S rRNA in the assembled 50S subunit and ribosome. In terms of biological role, the globular domain of the protein is located near the polypeptide exit tunnel on the outside of the subunit, while an extended beta-hairpin is found that lines the wall of the exit tunnel in the center of the 70S ribosome. This chain is Large ribosomal subunit protein uL22, found in Rickettsia typhi (strain ATCC VR-144 / Wilmington).